Here is a 184-residue protein sequence, read N- to C-terminus: NADH-quinone oxidoreductase subunit B (184 aa).

Residues Cys-37, Cys-38, Cys-103, and Cys-132 each coordinate [4Fe-4S] cluster.

This sequence belongs to the complex I 20 kDa subunit family. In terms of assembly, NDH-1 is composed of 14 different subunits. Subunits NuoB, C, D, E, F, and G constitute the peripheral sector of the complex. [4Fe-4S] cluster serves as cofactor.

The protein resides in the cell membrane. The enzyme catalyses a quinone + NADH + 5 H(+)(in) = a quinol + NAD(+) + 4 H(+)(out). In terms of biological role, NDH-1 shuttles electrons from NADH, via FMN and iron-sulfur (Fe-S) centers, to quinones in the respiratory chain. The immediate electron acceptor for the enzyme in this species is believed to be a menaquinone. Couples the redox reaction to proton translocation (for every two electrons transferred, four hydrogen ions are translocated across the cytoplasmic membrane), and thus conserves the redox energy in a proton gradient. This is NADH-quinone oxidoreductase subunit B from Mycobacteroides abscessus (strain ATCC 19977 / DSM 44196 / CCUG 20993 / CIP 104536 / JCM 13569 / NCTC 13031 / TMC 1543 / L948) (Mycobacterium abscessus).